The following is a 174-amino-acid chain: Co-chaperone protein HscB homolog (174 aa).

The J domain maps to 2-74 (NYFELFKFSP…IRRAEHMLSL (73 aa)).

It belongs to the HscB family. As to quaternary structure, interacts with HscA and stimulates its ATPase activity.

In terms of biological role, co-chaperone involved in the maturation of iron-sulfur cluster-containing proteins. Seems to help targeting proteins to be folded toward HscA. In Shewanella sp. (strain MR-4), this protein is Co-chaperone protein HscB homolog.